Reading from the N-terminus, the 394-residue chain is Phosphoglycerate kinase (394 aa).

Residues 21–23, Arg-36, 59–62, Arg-118, and Arg-151 each bind substrate; these read DFN and HLGR. The residue at position 183 (Ser-183) is a Phosphoserine. Lys-201 and Gly-292 together coordinate ATP. Thr-299 is subject to Phosphothreonine. ATP is bound by residues Glu-323 and 350–353; that span reads GGDS.

This sequence belongs to the phosphoglycerate kinase family. In terms of assembly, monomer.

The protein localises to the cytoplasm. It catalyses the reaction (2R)-3-phosphoglycerate + ATP = (2R)-3-phospho-glyceroyl phosphate + ADP. The protein operates within carbohydrate degradation; glycolysis; pyruvate from D-glyceraldehyde 3-phosphate: step 2/5. The polypeptide is Phosphoglycerate kinase (Bacillus mycoides (strain KBAB4) (Bacillus weihenstephanensis)).